Here is a 457-residue protein sequence, read N- to C-terminus: L-asparaginase-like protein GA18140 (457 aa).

The signal sequence occupies residues 1-20; sequence MRYLCRAQLLSLLLLPLLKA. 3 cysteine pairs are disulfide-bonded: C72-C78, C172-C188, and C327-C354.

Belongs to the Ntn-hydrolase family.

This Drosophila pseudoobscura pseudoobscura (Fruit fly) protein is L-asparaginase-like protein GA18140.